Here is a 209-residue protein sequence, read N- to C-terminus: Pyroglutamyl-peptidase 1 (209 aa).

Active-site residues include glutamate 85, cysteine 149, and histidine 168.

Belongs to the peptidase C15 family. Monomer.

The protein localises to the cytoplasm. It carries out the reaction Release of an N-terminal pyroglutamyl group from a polypeptide, the second amino acid generally not being Pro.. Functionally, removes 5-oxoproline from various penultimate amino acid residues except L-proline. This is Pyroglutamyl-peptidase 1 (Pgpep1) from Rattus norvegicus (Rat).